The primary structure comprises 491 residues: Protein OrfX3 (491 aa).

The protein belongs to the TULIP P47 family. In terms of assembly, heterodimer of OrfX1 and OrfX3; crystallizes as a dimer of heterodimers.

In terms of biological role, expression of the ptox operon (ntnh-orfX1-orfX2-orfX3-pmp1) in B.thuringiensis kills Anopheles but not Aedes mosquito 3rd instar larvae. The ntnh-pmp1 construct is about half as toxic. The polypeptide is Protein OrfX3 (Paraclostridium bifermentans (Clostridium bifermentans)).